Reading from the N-terminus, the 428-residue chain is Glutamate-1-semialdehyde 2,1-aminomutase (428 aa).

Lys265 bears the N6-(pyridoxal phosphate)lysine mark.

Belongs to the class-III pyridoxal-phosphate-dependent aminotransferase family. HemL subfamily. As to quaternary structure, homodimer. Pyridoxal 5'-phosphate serves as cofactor.

It localises to the cytoplasm. It catalyses the reaction (S)-4-amino-5-oxopentanoate = 5-aminolevulinate. It participates in porphyrin-containing compound metabolism; protoporphyrin-IX biosynthesis; 5-aminolevulinate from L-glutamyl-tRNA(Glu): step 2/2. This is Glutamate-1-semialdehyde 2,1-aminomutase from Proteus mirabilis (strain HI4320).